Here is a 175-residue protein sequence, read N- to C-terminus: Alpha-crystallin B chain (175 aa).

The residue at position 1 (methionine 1) is an N-acetylmethionine. Serine 19 bears the Phosphoserine mark. Serine 41 is a glycosylation site (O-linked (GlcNAc) serine). 2 positions are modified to phosphoserine: serine 45 and serine 59. The sHSP domain occupies 56–164; sequence RAPSWIDTGL…PERTIPITRE (109 aa). Histidine 83 is a binding site for Zn(2+). The residue at position 92 (lysine 92) is an N6-acetyllysine. Zn(2+) is bound by residues histidine 104, glutamate 106, histidine 111, and histidine 119. Residues 142-175 are disordered; it reads VLTVNGPRKQAPGPERTIPITREEKPAVTAAPKK. The residue at position 166 (lysine 166) is an N6-acetyllysine. Residue threonine 170 is glycosylated (O-linked (GlcNAc) threonine).

This sequence belongs to the small heat shock protein (HSP20) family. As to quaternary structure, heteromer composed of three CRYAA and one CRYAB subunits. Aggregates with homologous proteins, including the small heat shock protein HSPB1, to form large heteromeric complexes. Inter-subunit bridging via zinc ions enhances stability, which is crucial as there is no protein turn over in the lens. Interacts with HSPBAP1 and TTN/titin. Interacts with TMEM109; in the cellular response to DNA damage. Interacts with DES; binds rapidly during early stages of DES filament assembly and a reduced binding seen in the later stages. Interacts with TMED10; the interaction mediates the translocation from the cytoplasm into the ERGIC (endoplasmic reticulum-Golgi intermediate compartment) and thereby secretion. Interacts with ATP6V1A and with MTOR, forming a ternary complex. Lens as well as other tissues.

It localises to the cytoplasm. The protein localises to the nucleus. Its subcellular location is the secreted. The protein resides in the lysosome. May contribute to the transparency and refractive index of the lens. Has chaperone-like activity, preventing aggregation of various proteins under a wide range of stress conditions. In lens epithelial cells, stabilizes the ATP6V1A protein, preventing its degradation by the proteasome. In Oryctolagus cuniculus (Rabbit), this protein is Alpha-crystallin B chain (CRYAB).